The following is a 467-amino-acid chain: Gamma-aminobutyric acid receptor subunit rho-3 (467 aa).

The N-terminal stretch at 1–24 (MVLAFQLVSFTYIWIILKPNVCAA) is a signal peptide. Residues 25 to 266 (SNIKMTHQRC…LFINFVLRRH (242 aa)) are Extracellular-facing. 2 residues coordinate 4-aminobutanoate: Arg111 and Ser175. Residues Cys184 and Cys198 are joined by a disulfide bond. Position 203 (Glu203) interacts with 4-aminobutanoate. The N-linked (GlcNAc...) asparagine glycan is linked to Asn220. Residues 267 to 287 (VFFFVLQTYFPAILMVMLSWV) form a helical membrane-spanning segment. At 288–299 (SFWIDRRAVPAR) the chain is on the cytoplasmic side. Residues 300 to 320 (VSLGITTVLTMSTIITAVSAS) form a helical membrane-spanning segment. The Extracellular segment spans residues 321–331 (MPQVSYLKAVD). A helical membrane pass occupies residues 332-352 (VYLWVSSLFVFLSVIEYAAVN). The interaction with SQSTM1 stretch occupies residues 347-448 (EYAAVNYLTT…NNHVIDTYSR (102 aa)). The Cytoplasmic segment spans residues 353–446 (YLTTVEERKQ…LENNHVIDTY (94 aa)). The chain crosses the membrane as a helical span at residues 447-467 (SRILFPIVYILFNLFYWGVYV).

It belongs to the ligand-gated ion channel (TC 1.A.9) family. Gamma-aminobutyric acid receptor (TC 1.A.9.5) subfamily. GABRR3 sub-subfamily. Three rho subunits (rho-1/GBRR1, rho-2/GBRR2 and rho-3/GBRR3) coassemble either to form functional homopentamers or heteropentamers. Forms a ternary complex with SQSTM1 and PRKCZ.

The protein resides in the postsynaptic cell membrane. The protein localises to the cell membrane. It carries out the reaction chloride(in) = chloride(out). With respect to regulation, inhibited by TPMPA, a rho-specific antagonist, when forming a homopentamer. In terms of biological role, rho subunit of the pentameric ligand-gated chloride channels responsible for mediating the effects of gamma-aminobutyric acid (GABA), the major inhibitory neurotransmitter in the brain. Rho-containing GABA-gated chloride channels are a subclass of GABA(A) receptors (GABAARs) entirely composed of rho subunits, where GABA molecules bind at the rho intersubunit interfaces. When activated by GABA, rho-GABAARs selectively allow the flow of chloride anions across the cell membrane down their electrochemical gradient. The protein is Gamma-aminobutyric acid receptor subunit rho-3 of Homo sapiens (Human).